A 174-amino-acid polypeptide reads, in one-letter code: MAKQQSKRPQAADERDDGLREKMVAINRVTKVVKGGRILGFAALTVVGDGDGGVGMGKGKSREVPVAVQKAMDEARRKLKKISLKNGTLQHAIVGKHGAASVLMQPAPSGTGIIAGGPMRAVFEVMGVTDVTCKCLGSANPYNVVRATLNGLLAINTPAEIAAKRGKSVEEILG.

Positions 19 to 82 (LREKMVAINR…DEARRKLKKI (64 aa)) constitute an S5 DRBM domain.

Belongs to the universal ribosomal protein uS5 family. In terms of assembly, part of the 30S ribosomal subunit. Contacts proteins S4 and S8.

In terms of biological role, with S4 and S12 plays an important role in translational accuracy. Located at the back of the 30S subunit body where it stabilizes the conformation of the head with respect to the body. The protein is Small ribosomal subunit protein uS5 of Aromatoleum aromaticum (strain DSM 19018 / LMG 30748 / EbN1) (Azoarcus sp. (strain EbN1)).